We begin with the raw amino-acid sequence, 768 residues long: Ribosomal RNA large subunit methyltransferase K/L (768 aa).

In terms of domain architecture, THUMP spans Asp60–Leu175.

Belongs to the methyltransferase superfamily. RlmKL family.

It localises to the cytoplasm. The enzyme catalyses guanosine(2445) in 23S rRNA + S-adenosyl-L-methionine = N(2)-methylguanosine(2445) in 23S rRNA + S-adenosyl-L-homocysteine + H(+). The catalysed reaction is guanosine(2069) in 23S rRNA + S-adenosyl-L-methionine = N(2)-methylguanosine(2069) in 23S rRNA + S-adenosyl-L-homocysteine + H(+). In terms of biological role, specifically methylates the guanine in position 2445 (m2G2445) and the guanine in position 2069 (m7G2069) of 23S rRNA. In Psychrobacter arcticus (strain DSM 17307 / VKM B-2377 / 273-4), this protein is Ribosomal RNA large subunit methyltransferase K/L.